The primary structure comprises 196 residues: HTH-type transcriptional regulator UidR (196 aa).

One can recognise an HTH tetR-type domain in the interval 10 to 70 (QPTRTRILNA…AIILQDQERA (61 aa)). The segment at residues 33 to 52 (SMKAICKSCAISPGTLYHHF) is a DNA-binding region (H-T-H motif).

In terms of biological role, repressor for the uidRABC (gusRABC) operon. This Escherichia coli O157:H7 protein is HTH-type transcriptional regulator UidR (uidR).